The primary structure comprises 408 residues: Peptidase T (408 aa).

His-78 contributes to the Zn(2+) binding site. Residue Asp-80 is part of the active site. Residue Asp-141 participates in Zn(2+) binding. Catalysis depends on Glu-175, which acts as the Proton acceptor. Positions 176, 198, and 380 each coordinate Zn(2+).

It belongs to the peptidase M20B family. Zn(2+) serves as cofactor.

It is found in the cytoplasm. It carries out the reaction Release of the N-terminal residue from a tripeptide.. Its function is as follows. Cleaves the N-terminal amino acid of tripeptides. The polypeptide is Peptidase T (Clostridium botulinum (strain Loch Maree / Type A3)).